The primary structure comprises 180 residues: UPF0227 protein YpsIP31758_1593 (180 aa).

The protein belongs to the UPF0227 family.

In Yersinia pseudotuberculosis serotype O:1b (strain IP 31758), this protein is UPF0227 protein YpsIP31758_1593.